The primary structure comprises 426 residues: Glutamate-1-semialdehyde 2,1-aminomutase (426 aa).

Lysine 265 carries the post-translational modification N6-(pyridoxal phosphate)lysine.

It belongs to the class-III pyridoxal-phosphate-dependent aminotransferase family. HemL subfamily. In terms of assembly, homodimer. The cofactor is pyridoxal 5'-phosphate.

It localises to the cytoplasm. The enzyme catalyses (S)-4-amino-5-oxopentanoate = 5-aminolevulinate. It functions in the pathway porphyrin-containing compound metabolism; protoporphyrin-IX biosynthesis; 5-aminolevulinate from L-glutamyl-tRNA(Glu): step 2/2. The sequence is that of Glutamate-1-semialdehyde 2,1-aminomutase from Cellvibrio japonicus (strain Ueda107) (Pseudomonas fluorescens subsp. cellulosa).